Reading from the N-terminus, the 180-residue chain is ATP synthase subunit delta (180 aa).

This sequence belongs to the ATPase delta chain family. F-type ATPases have 2 components, F(1) - the catalytic core - and F(0) - the membrane proton channel. F(1) has five subunits: alpha(3), beta(3), gamma(1), delta(1), epsilon(1). F(0) has three main subunits: a(1), b(2) and c(10-14). The alpha and beta chains form an alternating ring which encloses part of the gamma chain. F(1) is attached to F(0) by a central stalk formed by the gamma and epsilon chains, while a peripheral stalk is formed by the delta and b chains.

The protein resides in the cell inner membrane. F(1)F(0) ATP synthase produces ATP from ADP in the presence of a proton or sodium gradient. F-type ATPases consist of two structural domains, F(1) containing the extramembraneous catalytic core and F(0) containing the membrane proton channel, linked together by a central stalk and a peripheral stalk. During catalysis, ATP synthesis in the catalytic domain of F(1) is coupled via a rotary mechanism of the central stalk subunits to proton translocation. In terms of biological role, this protein is part of the stalk that links CF(0) to CF(1). It either transmits conformational changes from CF(0) to CF(1) or is implicated in proton conduction. The protein is ATP synthase subunit delta of Legionella pneumophila subsp. pneumophila (strain Philadelphia 1 / ATCC 33152 / DSM 7513).